The primary structure comprises 550 residues: Glucagon-like peptide 2 receptor (550 aa).

Residues 1–173 lie on the Extracellular side of the membrane; it reads MRPQPSPAVP…SFRQNVDHYA (173 aa). 3 disulfides stabilise this stretch: cysteine 83/cysteine 105, cysteine 96/cysteine 137, and cysteine 118/cysteine 159. 4 N-linked (GlcNAc...) asparagine glycosylation sites follow: asparagine 97, asparagine 113, asparagine 148, and asparagine 162. A helical membrane pass occupies residues 174 to 198; sequence LLYTLQLMYTVGYSVSLISLFLALT. At 199–210 the chain is on the cytoplasmic side; that stretch reads LFLFLRKLHCTR. Residues 211 to 235 traverse the membrane as a helical segment; sequence NYIHMNLFASFILKVLAVLVKDMVS. The Extracellular portion of the chain corresponds to 236–261; it reads HNSYSKRPDDESGWMSYLSETSVSCR. Residues 262 to 285 form a helical membrane-spanning segment; the sequence is SVQVLLHYFVGTNHLWLLVEGLYL. Topologically, residues 286–299 are cytoplasmic; it reads HTLLEPTVFPERRL. Residues 300-321 form a helical membrane-spanning segment; that stretch reads WPKYLVVGWAFPMLFVIPWGFA. Residues 322 to 339 are Extracellular-facing; it reads RAHLENTRCWATNGNLKI. A helical membrane pass occupies residues 340–362; the sequence is WWIIRGPMLLCVTVNFFIFLKIL. Residues 363–386 are Cytoplasmic-facing; the sequence is KLLISKLKAHQMCFRDYKYRLAKS. A helical membrane pass occupies residues 387 to 405; sequence TLLLIPLLGVHEVLFTFFP. Residues 406 to 417 are Extracellular-facing; it reads DDQVQGFSKRIR. A helical membrane pass occupies residues 418–438; the sequence is LFIQLTLSSVHGFLVALQYGF. Over 439–550 the chain is Cytoplasmic; sequence ANGEVKAELR…MEEILEESEI (112 aa).

Belongs to the G-protein coupled receptor 2 family.

The protein resides in the cell membrane. This is a receptor for glucagon-like peptide 2. The activity of this receptor is mediated by G proteins which activate adenylyl cyclase. The sequence is that of Glucagon-like peptide 2 receptor (Glp2r) from Rattus norvegicus (Rat).